The chain runs to 720 residues: Calcium/calmodulin-dependent protein kinase type II (720 aa).

The Protein kinase domain occupies 12-269 (YDVKEELGKG…ADQALKVPWI (258 aa)). ATP-binding positions include 18–26 (LGKGAFSVV) and lysine 41. Aspartate 134 serves as the catalytic Proton acceptor. Threonine 284 bears the Phosphothreonine; by autocatalysis mark. Disordered stretches follow at residues 317–345 (SDST…QPTS) and 504–586 (DNLS…NLSA). 2 stretches are compositionally biased toward polar residues: residues 504 to 514 (DNLSASTSSDL) and 526 to 540 (PPST…SQTI). Residues 569 to 586 (SSSNSSTASKSSSTNLSA) show a composition bias toward low complexity.

This sequence belongs to the protein kinase superfamily. CAMK Ser/Thr protein kinase family. CaMK subfamily. As to quaternary structure, dodecamer. Subunits are tightly packed around a central ring-shaped scaffold with extensive contacts between the regulatory segment of one kinase and the catalytic domain of another enabling cooperative activation of a subunit by the adjacent molecule. Interacts with and phosphorylates daf-16; the interaction promotes daf-16 nuclear localization. Interacts with egl-2 and tir-1. Interacts with nsy-1. It depends on Mg(2+) as a cofactor. In terms of tissue distribution, expressed in the nervous system. Observed in the ADF and AWC neurons. Position in AWC neurons is regulated by microtubules. Localized to clusters in ventral cord neurites which appear to be required for glr-1 trafficking. Also present in oocytes.

The protein localises to the cytoplasm. It localises to the cell projection. The protein resides in the axon. It is found in the perikaryon. It carries out the reaction L-seryl-[protein] + ATP = O-phospho-L-seryl-[protein] + ADP + H(+). The catalysed reaction is L-threonyl-[protein] + ATP = O-phospho-L-threonyl-[protein] + ADP + H(+). Its activity is regulated as follows. Ca2(+)/calmodulin binding removes an autoinhibitory regulatory segment located C-terminal to the kinase domain. This releases the catalytic activity of the enzyme and makes accessible a regulatory residue Thr-284. Phosphorylation of Thr-284 by another kinase domain within the oligomeric holoenzyme keeps CaMKII active in the absence of Ca(2+)/calmodulin by preventing the rebinding of the regulatory segment to the kinase domain and by increasing the affinity of calmodulin for the enzyme. Can respond to high-frequency Ca(2+) pulses to become Ca(2+) independent. Acts in the signaling of a variety of pathways and processes. Phosphorylates 'Ser-319' of daf-16 in response to stress signals, such as heat, starvation and oxidation, which plays a role in prolonging lifespan. Required for viability under chronic osmotic stress in which it acts downstream of osr-1. Has roles in locomotion, oocyte maturation, brood size, egg laying, defecation, meiotic maturation and neuronal cell fate specification. Required for the regulation of synaptic density and neuromuscular junction morphology. Regulates the synaptic trafficking of glr-1. Bidirectional modulator of neurotransmitter release with negative modulatory effects mainly mediated via slo-1 activation. Involved in activation of ADF neurons and increased tph-1 transcription following exposure to pathogenic bacteria which leads to learned olfactory aversion to the bacteria. Implicated in the muscle regulation of spicule protraction. In conjunction with egl-2 has a role in the suppression of mating behavior under food deprivation to encourage foraging. Involved in restricting str-2 expression to only one of the two AWC neurons. May suppress the functional response to an internal pacemaker, perhaps by modulating the activity of the IP3 receptor. The sequence is that of Calcium/calmodulin-dependent protein kinase type II (unc-43) from Caenorhabditis elegans.